The primary structure comprises 264 residues: uncharacterized protein (264 aa).

A disordered region spans residues 1-20; that stretch reads MENIEKKCQPETINEDNNDE.

The protein belongs to the mimivirus R73/L269/L862 family.

This is an uncharacterized protein from Acanthamoeba polyphaga mimivirus (APMV).